Consider the following 356-residue polypeptide: L-Ala-D/L-Glu epimerase (356 aa).

161–163 (KVK) contributes to the substrate binding site. 3 residues coordinate Mg(2+): Asp191, Glu219, and Asp244. Residues Lys268 and 320–322 (DLD) each bind substrate.

Belongs to the mandelate racemase/muconate lactonizing enzyme family. Mg(2+) is required as a cofactor.

The enzyme catalyses L-alanyl-L-glutamate = L-alanyl-D-glutamate. Its function is as follows. Dipeptide epimerase with a preference for substrates containing a Glu residue in the second position. Catalyzes the epimerization of L-Ala-L-Glu, L-Ser-L-Glu, L-Thr-L-Glu, L-Val-L-Glu, L-Gly-L-Glu and L-Thr-L-Glu (in vitro). May play a role in the metabolism of the murein peptide, of which L-Ala-D-Glu is a component. In Francisella tularensis subsp. novicida (strain U112), this protein is L-Ala-D/L-Glu epimerase.